The following is an 89-amino-acid chain: Small ribosomal subunit protein bS16 (89 aa).

The protein belongs to the bacterial ribosomal protein bS16 family.

In Nitrosomonas europaea (strain ATCC 19718 / CIP 103999 / KCTC 2705 / NBRC 14298), this protein is Small ribosomal subunit protein bS16.